A 712-amino-acid chain; its full sequence is Polyribonucleotide nucleotidyltransferase (712 aa).

Mg(2+) is bound by residues D487 and D493. Residues 554-613 form the KH domain; sequence PRIEVMNIPVDKIREVIGSGGKVIREIVEKTGAKINIEDDGTVKIASSSGKEIEAARKWI. The region spanning 623–691 is the S1 motif domain; it reads GQIYEGTVVK…ERGKVRLSMK (69 aa).

It belongs to the polyribonucleotide nucleotidyltransferase family. It depends on Mg(2+) as a cofactor.

The protein resides in the cytoplasm. It catalyses the reaction RNA(n+1) + phosphate = RNA(n) + a ribonucleoside 5'-diphosphate. Its function is as follows. Involved in mRNA degradation. Catalyzes the phosphorolysis of single-stranded polyribonucleotides processively in the 3'- to 5'-direction. The polypeptide is Polyribonucleotide nucleotidyltransferase (Rhizobium etli (strain CIAT 652)).